The sequence spans 343 residues: Holliday junction branch migration complex subunit RuvB (343 aa).

Residues 1-182 (MRDELLNTPT…FGISNRLDYY (182 aa)) are large ATPase domain (RuvB-L). ATP contacts are provided by residues isoleucine 21, arginine 22, glycine 63, lysine 66, threonine 67, threonine 68, 129–131 (EDF), arginine 172, tyrosine 182, and arginine 219. Threonine 67 lines the Mg(2+) pocket. Positions 183–253 (SAELLQRIII…LARKTLAALE (71 aa)) are small ATPAse domain (RuvB-S). Residues 256–343 (EDGLDDMDKK…DGPLFQKGSS (88 aa)) form a head domain (RuvB-H) region. Positions 311 and 316 each coordinate DNA.

Belongs to the RuvB family. As to quaternary structure, homohexamer. Forms an RuvA(8)-RuvB(12)-Holliday junction (HJ) complex. HJ DNA is sandwiched between 2 RuvA tetramers; dsDNA enters through RuvA and exits via RuvB. An RuvB hexamer assembles on each DNA strand where it exits the tetramer. Each RuvB hexamer is contacted by two RuvA subunits (via domain III) on 2 adjacent RuvB subunits; this complex drives branch migration. In the full resolvosome a probable DNA-RuvA(4)-RuvB(12)-RuvC(2) complex forms which resolves the HJ.

Its subcellular location is the cytoplasm. It carries out the reaction ATP + H2O = ADP + phosphate + H(+). Functionally, the RuvA-RuvB-RuvC complex processes Holliday junction (HJ) DNA during genetic recombination and DNA repair, while the RuvA-RuvB complex plays an important role in the rescue of blocked DNA replication forks via replication fork reversal (RFR). RuvA specifically binds to HJ cruciform DNA, conferring on it an open structure. The RuvB hexamer acts as an ATP-dependent pump, pulling dsDNA into and through the RuvAB complex. RuvB forms 2 homohexamers on either side of HJ DNA bound by 1 or 2 RuvA tetramers; 4 subunits per hexamer contact DNA at a time. Coordinated motions by a converter formed by DNA-disengaged RuvB subunits stimulates ATP hydrolysis and nucleotide exchange. Immobilization of the converter enables RuvB to convert the ATP-contained energy into a lever motion, pulling 2 nucleotides of DNA out of the RuvA tetramer per ATP hydrolyzed, thus driving DNA branch migration. The RuvB motors rotate together with the DNA substrate, which together with the progressing nucleotide cycle form the mechanistic basis for DNA recombination by continuous HJ branch migration. Branch migration allows RuvC to scan DNA until it finds its consensus sequence, where it cleaves and resolves cruciform DNA. This chain is Holliday junction branch migration complex subunit RuvB, found in Prosthecochloris aestuarii (strain DSM 271 / SK 413).